The primary structure comprises 93 residues: Molybdopterin synthase sulfur carrier subunit (93 aa).

Residue glycine 93 is modified to 1-thioglycine; alternate. Glycine 93 bears the Glycyl adenylate; alternate mark.

It belongs to the MoaD family. MOCS2A subfamily. As to quaternary structure, heterotetramer; composed of 2 small (MOCS2A) and 2 large (MOCS2B) subunits. Post-translationally, C-terminal thiocarboxylation occurs in 2 steps, it is first acyl-adenylated (-COAMP) via the hesA/moeB/thiF part of UBA4, then thiocarboxylated (-COSH) via the rhodanese domain of UBA4.

It is found in the cytoplasm. It functions in the pathway cofactor biosynthesis; molybdopterin biosynthesis. Functionally, acts as a sulfur carrier required for molybdopterin biosynthesis. Component of the molybdopterin synthase complex that catalyzes the conversion of precursor Z into molybdopterin by mediating the incorporation of 2 sulfur atoms into precursor Z to generate a dithiolene group. In the complex, serves as sulfur donor by being thiocarboxylated (-COSH) at its C-terminus by UBA4. After interaction with MOCS2B, the sulfur is then transferred to precursor Z to form molybdopterin. The chain is Molybdopterin synthase sulfur carrier subunit from Mycosarcoma maydis (Corn smut fungus).